We begin with the raw amino-acid sequence, 1384 residues long: CHD3-type chromatin-remodeling factor PICKLE (1384 aa).

Position 23 is a phosphoserine (Ser-23). The segment at 49–96 (ENACQACGESTNLVSCNTCTYAFHAKCLVPPLKDASVENWRCPECVSP) adopts a PHD-type zinc-finger fold. Chromo domains are found at residues 98 to 180 (NEID…NSED) and 190 to 249 (TTVD…RSKD). The Helicase ATP-binding domain occupies 285-471 (RFSWSKQTHV…FMLMHFLDAG (187 aa)). 298-305 (DEMGLGKT) is an ATP binding site. Residues 376 to 383 (KKKKSGQI) carry the Nuclear localization signal motif. The DEAH box motif lies at 422–425 (DEGH). The 162-residue stretch at 599–760 (LLDKMMVKLK…NINQEELDDI (162 aa)) folds into the Helicase C-terminal domain. The segment covering 893 to 912 (AGLEDVSSDGDESYEAESTD) has biased composition (acidic residues). 4 disordered regions span residues 893 to 941 (AGLE…TPLM), 1122 to 1152 (GLQGQNGSGGSNPGAQTNQNPGSVITGNNNA), 1313 to 1344 (SDQSKSHEDDTKPDLNNVEMKDTAEETKPLRG), and 1365 to 1384 (VDVKMEEAKEEEKPKNMVVD). A compositionally biased stretch (polar residues) spans 1138–1152 (TNQNPGSVITGNNNA). Basic and acidic residues-rich tracts occupy residues 1316–1341 (SKSHEDDTKPDLNNVEMKDTAEETKP) and 1367–1384 (VKMEEAKEEEKPKNMVVD).

Belongs to the SNF2/RAD54 helicase family. Interacts with TAF12B. Mostly expressed in tissue undergoing significant differentiation (meristems and primordia) such as young seedlings, influorescent tissue and young siliques, but not in endosperm and seed coat (at protein level). Levels decrease as organs age. Also present in trichomes.

The protein localises to the nucleus. Chromatin remodeling factor that represses the expression of embryonic trait genes (such as NFYB9/LEC1) upon and after seed germination and thus enables the developmental switch to post-germinative growth. Silences some MADS-box proteins such as PHE1 and PHE2. Plays a role during carpel differentiation. Regulates late processes in cytokinin signaling. The sequence is that of CHD3-type chromatin-remodeling factor PICKLE (PKL) from Arabidopsis thaliana (Mouse-ear cress).